Here is a 194-residue protein sequence, read N- to C-terminus: Holliday junction branch migration complex subunit RuvA (194 aa).

The interval 1 to 64 is domain I; that stretch reads MIGRLRGILA…EDSVSLYGFL (64 aa). Residues 65–140 are domain II; it reads REGERRLFRD…RAADFSSGAP (76 aa). A flexible linker region spans residues 140-144; the sequence is PITGQ. The tract at residues 145–194 is domain III; the sequence is LGPDAVSEATVALQQLGYKPAEAARMAREAGAEGDEVATVIRKALQAALR.

This sequence belongs to the RuvA family. As to quaternary structure, homotetramer. Forms an RuvA(8)-RuvB(12)-Holliday junction (HJ) complex. HJ DNA is sandwiched between 2 RuvA tetramers; dsDNA enters through RuvA and exits via RuvB. An RuvB hexamer assembles on each DNA strand where it exits the tetramer. Each RuvB hexamer is contacted by two RuvA subunits (via domain III) on 2 adjacent RuvB subunits; this complex drives branch migration. In the full resolvosome a probable DNA-RuvA(4)-RuvB(12)-RuvC(2) complex forms which resolves the HJ.

It localises to the cytoplasm. Functionally, the RuvA-RuvB-RuvC complex processes Holliday junction (HJ) DNA during genetic recombination and DNA repair, while the RuvA-RuvB complex plays an important role in the rescue of blocked DNA replication forks via replication fork reversal (RFR). RuvA specifically binds to HJ cruciform DNA, conferring on it an open structure. The RuvB hexamer acts as an ATP-dependent pump, pulling dsDNA into and through the RuvAB complex. HJ branch migration allows RuvC to scan DNA until it finds its consensus sequence, where it cleaves and resolves the cruciform DNA. The chain is Holliday junction branch migration complex subunit RuvA from Xanthomonas campestris pv. campestris (strain 8004).